Consider the following 278-residue polypeptide: NAD-capped RNA hydrolase NudC (278 aa).

Arg-84 provides a ligand contact to substrate. Cys-114 and Cys-117 together coordinate Zn(2+). Position 127 (Glu-127) interacts with substrate. A Zn(2+)-binding site is contributed by Cys-132. Tyr-140 serves as a coordination point for substrate. Residues 141 to 264 (PRISPSMIVL…SIARYLIEAY (124 aa)) form the Nudix hydrolase domain. Ala-174, Glu-190, and Glu-194 together coordinate a divalent metal cation. The short motif at 175 to 196 (GFVEPGESAEDCVHREVMEEVQ) is the Nudix box element. 208-215 (QCWPFPHS) serves as a coordination point for substrate. A divalent metal cation is bound at residue Glu-235. Ala-257 contacts substrate.

Belongs to the Nudix hydrolase family. NudC subfamily. Homodimer. Mg(2+) serves as cofactor. It depends on Mn(2+) as a cofactor. Zn(2+) is required as a cofactor.

It catalyses the reaction a 5'-end NAD(+)-phospho-ribonucleoside in mRNA + H2O = a 5'-end phospho-adenosine-phospho-ribonucleoside in mRNA + beta-nicotinamide D-ribonucleotide + 2 H(+). The catalysed reaction is NAD(+) + H2O = beta-nicotinamide D-ribonucleotide + AMP + 2 H(+). It carries out the reaction NADH + H2O = reduced beta-nicotinamide D-ribonucleotide + AMP + 2 H(+). Its function is as follows. mRNA decapping enzyme that specifically removes the nicotinamide adenine dinucleotide (NAD) cap from a subset of mRNAs by hydrolyzing the diphosphate linkage to produce nicotinamide mononucleotide (NMN) and 5' monophosphate mRNA. The NAD-cap is present at the 5'-end of some mRNAs and stabilizes RNA against 5'-processing. Has preference for mRNAs with a 5'-end purine. Catalyzes the hydrolysis of a broad range of dinucleotide pyrophosphates. The polypeptide is NAD-capped RNA hydrolase NudC (Pseudomonas syringae pv. syringae (strain B728a)).